A 1538-amino-acid polypeptide reads, in one-letter code: Lhr helicase/uracil glycosylase (1538 aa).

The tract at residues 1–897 (MADNPDPSSL…ERRASVLSLD (897 aa)) is lhr-Core. The ATP site is built by Q34, K57, T58, D179, E180, I398, R415, and H418. A Helicase ATP-binding domain is found at 38 to 235 (WHVAARSEHA…FLGGDRPVTV (198 aa)). The DEVH box signature appears at 179-182 (DEVH). Positions 284–462 (GILDEVLRHR…NLTPPHNPLD (179 aa)) constitute a Helicase C-terminal domain. Positions 463–552 (VLAQQTVAAA…VTSGGTIPDR (90 aa)) are beta-sheet bundle. The WH domain stretch occupies residues 553-623 (GMYSVLLPEG…SARLPFWRGE (71 aa)). The domain 4 stretch occupies residues 624-897 (GNGRPAELGE…ERRASVLSLD (274 aa)). Positions 898-1538 (SELLRNLLGQ…SSSPQGLDWG (641 aa)) are lhr-CTD. The interval 1287–1312 (SNARTSTRRSHRARRGRPVYAQPVSP) is disordered. Residues 1292 to 1303 (STRRSHRARRGR) are compositionally biased toward basic residues.

It belongs to the Lhr helicase family. Homooligomerizes, probably a homotetramer. Requires Ca(2+) as cofactor. It depends on Uracil deglycosylase activity does not require a cofactor. as a cofactor.

It carries out the reaction Couples ATP hydrolysis with the unwinding of duplex DNA by translocating in the 3'-5' direction.. It catalyses the reaction ATP + H2O = ADP + phosphate + H(+). The enzyme catalyses Hydrolyzes single-stranded DNA or mismatched double-stranded DNA and polynucleotides, releasing free uracil.. In terms of biological role, a 3'-5' helicase probably involved in DNA repair. Translocates in an ATP-dependent manner 3'-to-5' on single-stranded (ss)DNA, unwinding any encountered duplex nucleic acid. An RNA:DNA hybrid with a 3'-ssDNA loading strand is a 4.5-fold better helicase substrate than 3'-tailed double-stranded (ds)DNA; substrates where the helicase loads on a 3'-ssRNA tail (DNA:RNA and RNA:RNA) are not unwound. Unlike its M.smegmatis counterpart, the ATPase is not ssDNA-dependent. Forms a clamp around the ssDNA loading strand. Functionally, excises uracil residues from DNA; forked DNA with a dU residue is the best substrate followed by ssDNA. Inactive on dsDNA with a dU residue or DNA with an 8-oxoguanine residue. Uracil residues in DNA can arise as a result of misincorporation of dUMP residues by DNA polymerase or due to deamination of cytosine. This Escherichia coli (strain K12) protein is Lhr helicase/uracil glycosylase.